A 231-amino-acid chain; its full sequence is Ribosomal RNA large subunit methyltransferase E (231 aa).

S-adenosyl-L-methionine is bound by residues Gly76, Trp78, Asp99, Asp115, and Asp139. Lys179 serves as the catalytic Proton acceptor.

It belongs to the class I-like SAM-binding methyltransferase superfamily. RNA methyltransferase RlmE family.

It is found in the cytoplasm. It catalyses the reaction uridine(2552) in 23S rRNA + S-adenosyl-L-methionine = 2'-O-methyluridine(2552) in 23S rRNA + S-adenosyl-L-homocysteine + H(+). Functionally, specifically methylates the uridine in position 2552 of 23S rRNA at the 2'-O position of the ribose in the fully assembled 50S ribosomal subunit. The protein is Ribosomal RNA large subunit methyltransferase E of Bradyrhizobium sp. (strain ORS 278).